Here is a 409-residue protein sequence, read N- to C-terminus: uncharacterized protein (409 aa).

An OBG-type G domain is found at 5–274 (ILIGFVGKPS…LAKQGFVKYE (270 aa)). Residues 11–18 (GKPSSGKS) and 83–87 (DVAGL) each bind GTP.

This sequence belongs to the TRAFAC class OBG-HflX-like GTPase superfamily. OBG GTPase family.

The protein resides in the cytoplasm. Its subcellular location is the nucleus. This is an uncharacterized protein from Schizosaccharomyces pombe (strain 972 / ATCC 24843) (Fission yeast).